Here is a 37-residue protein sequence, read N- to C-terminus: Large ribosomal subunit protein bL36 (37 aa).

Belongs to the bacterial ribosomal protein bL36 family.

The polypeptide is Large ribosomal subunit protein bL36 (Halothermothrix orenii (strain H 168 / OCM 544 / DSM 9562)).